Here is a 465-residue protein sequence, read N- to C-terminus: 3-isopropylmalate dehydratase large subunit (465 aa).

Cysteine 346, cysteine 406, and cysteine 409 together coordinate [4Fe-4S] cluster.

It belongs to the aconitase/IPM isomerase family. LeuC type 1 subfamily. As to quaternary structure, heterodimer of LeuC and LeuD. [4Fe-4S] cluster serves as cofactor.

It catalyses the reaction (2R,3S)-3-isopropylmalate = (2S)-2-isopropylmalate. It participates in amino-acid biosynthesis; L-leucine biosynthesis; L-leucine from 3-methyl-2-oxobutanoate: step 2/4. Functionally, catalyzes the isomerization between 2-isopropylmalate and 3-isopropylmalate, via the formation of 2-isopropylmaleate. This chain is 3-isopropylmalate dehydratase large subunit, found in Psychromonas ingrahamii (strain DSM 17664 / CCUG 51855 / 37).